Here is a 589-residue protein sequence, read N- to C-terminus: Enhancer of polycomb-like protein 1 (589 aa).

Disordered regions lie at residues 298-339, 403-430, 468-497, and 516-589; these read GDED…RPAE, MTPPASASSGSMDEPTPMDLDKPKPNPP, LPSPARDLSEEQSDRWKYDQSSDDEDDAPV, and LQTV…QPVS. Residues 474–487 are compositionally biased toward basic and acidic residues; sequence DLSEEQSDRWKYDQ. Low complexity predominate over residues 557-566; the sequence is PQPNQSQSLP. A compositionally biased stretch (pro residues) spans 567 to 589; it reads LPQPQQPVAQPQPQPQPQAQPVS.

This sequence belongs to the enhancer of polycomb family. As to quaternary structure, component of the NuA4 histone acetyltransferase complex.

It localises to the nucleus. Its function is as follows. Component of the NuA4 histone acetyltransferase complex which is involved in transcriptional activation of selected genes principally by acetylation of nucleosomal histone H4 and H2A. The NuA4 complex is also involved in DNA repair. Involved in gene silencing by neighboring heterochromatin, blockage of the silencing spreading along the chromosome, and required for cell cycle progression through G2/M. The sequence is that of Enhancer of polycomb-like protein 1 (epl-1) from Neurospora crassa (strain ATCC 24698 / 74-OR23-1A / CBS 708.71 / DSM 1257 / FGSC 987).